A 382-amino-acid chain; its full sequence is Anhydro-N-acetylmuramic acid kinase (382 aa).

An ATP-binding site is contributed by 22–29; sequence GTSMDGVD.

Belongs to the anhydro-N-acetylmuramic acid kinase family.

The enzyme catalyses 1,6-anhydro-N-acetyl-beta-muramate + ATP + H2O = N-acetyl-D-muramate 6-phosphate + ADP + H(+). The protein operates within amino-sugar metabolism; 1,6-anhydro-N-acetylmuramate degradation. It functions in the pathway cell wall biogenesis; peptidoglycan recycling. Its function is as follows. Catalyzes the specific phosphorylation of 1,6-anhydro-N-acetylmuramic acid (anhMurNAc) with the simultaneous cleavage of the 1,6-anhydro ring, generating MurNAc-6-P. Is required for the utilization of anhMurNAc either imported from the medium or derived from its own cell wall murein, and thus plays a role in cell wall recycling. This is Anhydro-N-acetylmuramic acid kinase from Burkholderia orbicola (strain MC0-3).